Here is a 339-residue protein sequence, read N- to C-terminus: Anthranilate phosphoribosyltransferase (339 aa).

Residues glycine 81, 84–85 (GD), serine 89, 91–94 (NVSS), 109–117 (KHGNRALSS), and alanine 121 contribute to the 5-phospho-alpha-D-ribose 1-diphosphate site. Glycine 81 contacts anthranilate. Residue serine 93 coordinates Mg(2+). Asparagine 112 is an anthranilate binding site. Arginine 167 serves as a coordination point for anthranilate. Residues aspartate 225 and glutamate 226 each contribute to the Mg(2+) site.

It belongs to the anthranilate phosphoribosyltransferase family. In terms of assembly, homodimer. It depends on Mg(2+) as a cofactor.

It catalyses the reaction N-(5-phospho-beta-D-ribosyl)anthranilate + diphosphate = 5-phospho-alpha-D-ribose 1-diphosphate + anthranilate. Its pathway is amino-acid biosynthesis; L-tryptophan biosynthesis; L-tryptophan from chorismate: step 2/5. Its function is as follows. Catalyzes the transfer of the phosphoribosyl group of 5-phosphorylribose-1-pyrophosphate (PRPP) to anthranilate to yield N-(5'-phosphoribosyl)-anthranilate (PRA). The sequence is that of Anthranilate phosphoribosyltransferase from Brucella suis biovar 1 (strain 1330).